Consider the following 312-residue polypeptide: D-alanine--D-alanine ligase (312 aa).

In terms of domain architecture, ATP-grasp spans 108–308 (KLVWQQTGIP…YSELVVKVLS (201 aa)). Residue 138 to 193 (VAKLGMPLFVKPASEGSSVAVEKVKSADALPAALEEAAKHDKIVIVEKSIEGGGEY) coordinates ATP. Positions 262, 275, and 277 each coordinate Mg(2+).

This sequence belongs to the D-alanine--D-alanine ligase family. The cofactor is Mg(2+). Requires Mn(2+) as cofactor.

It is found in the cytoplasm. It catalyses the reaction 2 D-alanine + ATP = D-alanyl-D-alanine + ADP + phosphate + H(+). It participates in cell wall biogenesis; peptidoglycan biosynthesis. Cell wall formation. This chain is D-alanine--D-alanine ligase, found in Burkholderia thailandensis (strain ATCC 700388 / DSM 13276 / CCUG 48851 / CIP 106301 / E264).